A 378-amino-acid polypeptide reads, in one-letter code: Chaperone protein DnaJ (378 aa).

The J domain maps to 5–70 (DYYEVLGVAK…QKRAAYDQYG (66 aa)). The segment at 138–216 (GYDTQIRVPS…CHGSGKVKET (79 aa)) adopts a CR-type zinc-finger fold. 8 residues coordinate Zn(2+): cysteine 151, cysteine 154, cysteine 168, cysteine 171, cysteine 190, cysteine 193, cysteine 204, and cysteine 207. CXXCXGXG motif repeat units lie at residues 151 to 158 (CEVCHGSG), 168 to 175 (CPTCHGQG), 190 to 197 (CPKCHGTG), and 204 to 211 (CVHCHGSG).

This sequence belongs to the DnaJ family. Homodimer. Zn(2+) is required as a cofactor.

It localises to the cytoplasm. Functionally, participates actively in the response to hyperosmotic and heat shock by preventing the aggregation of stress-denatured proteins and by disaggregating proteins, also in an autonomous, DnaK-independent fashion. Unfolded proteins bind initially to DnaJ; upon interaction with the DnaJ-bound protein, DnaK hydrolyzes its bound ATP, resulting in the formation of a stable complex. GrpE releases ADP from DnaK; ATP binding to DnaK triggers the release of the substrate protein, thus completing the reaction cycle. Several rounds of ATP-dependent interactions between DnaJ, DnaK and GrpE are required for fully efficient folding. Also involved, together with DnaK and GrpE, in the DNA replication of plasmids through activation of initiation proteins. This is Chaperone protein DnaJ from Burkholderia lata (strain ATCC 17760 / DSM 23089 / LMG 22485 / NCIMB 9086 / R18194 / 383).